Consider the following 116-residue polypeptide: Transcription elongation factor SPT4 homolog 2 (116 aa).

The C4-type zinc finger occupies 19–39 (CLRCRLVKTYDQFRDAGCENC).

It belongs to the SPT4 family.

The protein resides in the nucleus. In terms of biological role, may regulate transcription elongation by RNA polymerase II. May enhance transcriptional pausing at sites proximal to the promoter, which may in turn facilitate the assembly of an elongation competent RNA polymerase II complex. The sequence is that of Transcription elongation factor SPT4 homolog 2 from Arabidopsis thaliana (Mouse-ear cress).